A 223-amino-acid polypeptide reads, in one-letter code: Pyridoxine/pyridoxamine 5'-phosphate oxidase (223 aa).

Substrate-binding positions include 9–12 and K76; that span reads RVGY. FMN is bound by residues 71–76, 86–87, K93, and Q115; these read RTVLCK and FT. Residues Y133, R137, and S141 each contribute to the substrate site. FMN is bound by residues 150 to 151 and W196; that span reads QS. Residue 202–204 participates in substrate binding; sequence RMH. R206 is a binding site for FMN.

It belongs to the pyridoxamine 5'-phosphate oxidase family. In terms of assembly, homodimer. FMN serves as cofactor.

The catalysed reaction is pyridoxamine 5'-phosphate + O2 + H2O = pyridoxal 5'-phosphate + H2O2 + NH4(+). It carries out the reaction pyridoxine 5'-phosphate + O2 = pyridoxal 5'-phosphate + H2O2. The protein operates within cofactor metabolism; pyridoxal 5'-phosphate salvage; pyridoxal 5'-phosphate from pyridoxamine 5'-phosphate: step 1/1. It functions in the pathway cofactor metabolism; pyridoxal 5'-phosphate salvage; pyridoxal 5'-phosphate from pyridoxine 5'-phosphate: step 1/1. In terms of biological role, catalyzes the oxidation of either pyridoxine 5'-phosphate (PNP) or pyridoxamine 5'-phosphate (PMP) into pyridoxal 5'-phosphate (PLP). The protein is Pyridoxine/pyridoxamine 5'-phosphate oxidase of Rhodococcus jostii (strain RHA1).